Consider the following 156-residue polypeptide: Ribosomal RNA large subunit methyltransferase H (156 aa).

Residues G104 and 123–128 contribute to the S-adenosyl-L-methionine site; that span reads LSAMTL.

It belongs to the RNA methyltransferase RlmH family. Homodimer.

It is found in the cytoplasm. It carries out the reaction pseudouridine(1915) in 23S rRNA + S-adenosyl-L-methionine = N(3)-methylpseudouridine(1915) in 23S rRNA + S-adenosyl-L-homocysteine + H(+). In terms of biological role, specifically methylates the pseudouridine at position 1915 (m3Psi1915) in 23S rRNA. The chain is Ribosomal RNA large subunit methyltransferase H from Chromobacterium violaceum (strain ATCC 12472 / DSM 30191 / JCM 1249 / CCUG 213 / NBRC 12614 / NCIMB 9131 / NCTC 9757 / MK).